Here is a 138-residue protein sequence, read N- to C-terminus: Large ribosomal subunit protein uL16 (138 aa).

Positions 1–16 are enriched in basic residues; sequence MLIPKRVKFRRQHRPN. Residues 1-25 form a disordered region; that stretch reads MLIPKRVKFRRQHRPNRSGMSKGGN.

The protein belongs to the universal ribosomal protein uL16 family. In terms of assembly, part of the 50S ribosomal subunit.

In terms of biological role, binds 23S rRNA and is also seen to make contacts with the A and possibly P site tRNAs. In Corynebacterium urealyticum (strain ATCC 43042 / DSM 7109), this protein is Large ribosomal subunit protein uL16.